The following is a 399-amino-acid chain: Elongation factor Tu (399 aa).

The tr-type G domain maps to 10–209 (KPHVNIGTIG…AVDEYIPTPE (200 aa)). A G1 region spans residues 19-26 (GHVDHGKT). 19–26 (GHVDHGKT) is a GTP binding site. Residue Thr26 participates in Mg(2+) binding. The G2 stretch occupies residues 60–64 (GITIN). Residues 81–84 (DCPG) are G3. Residues 81-85 (DCPGH) and 136-139 (NKMD) contribute to the GTP site. A G4 region spans residues 136-139 (NKMD). The segment at 174–176 (SAL) is G5.

The protein belongs to the TRAFAC class translation factor GTPase superfamily. Classic translation factor GTPase family. EF-Tu/EF-1A subfamily. As to quaternary structure, monomer.

The protein resides in the cytoplasm. It catalyses the reaction GTP + H2O = GDP + phosphate + H(+). Functionally, GTP hydrolase that promotes the GTP-dependent binding of aminoacyl-tRNA to the A-site of ribosomes during protein biosynthesis. The chain is Elongation factor Tu from Nautilia profundicola (strain ATCC BAA-1463 / DSM 18972 / AmH).